A 247-amino-acid polypeptide reads, in one-letter code: Probable transcriptional regulatory protein GSU1074 (247 aa).

Belongs to the TACO1 family.

The protein localises to the cytoplasm. This Geobacter sulfurreducens (strain ATCC 51573 / DSM 12127 / PCA) protein is Probable transcriptional regulatory protein GSU1074.